The chain runs to 517 residues: FAD-dependent monooxygenase FUP4 (517 aa).

The first 19 residues, 1–19 (MRQSSTLTWTSVLLAPLAA), serve as a signal peptide directing secretion. One can recognise an FAD-binding PCMH-type domain in the interval 75–246 (QALRPACLVH…TRFDLDLYDQ (172 aa)). His112 carries the pros-8alpha-FAD histidine modification. N-linked (GlcNAc...) asparagine glycans are attached at residues Asn163, Asn208, and Asn346.

This sequence belongs to the oxygen-dependent FAD-linked oxidoreductase family. Requires FAD as cofactor.

It functions in the pathway secondary metabolite biosynthesis; terpenoid biosynthesis. FAD-dependent monooxygenase; part of the gene cluster that mediates the biosynthesis of the mycotoxin fusaproliferin (FUP) that belongs to the class of bicyclic sesterterpenoids. FUP4 catalyzes the oxidation of the hydroxy group at the C-16 position of preterpestacin III to a keto group, leading to the formation of (-)-terpestacin. The product of FUP1, preterpestacin I, might also serve as a substrate of FUP4 to yield oxo-preterpestacin I. The FUP biosynthetic pathway starts with the enzyme encoded by FUP1 that combines a C-terminal prenyltransferase domain responsible for the synthesis of geranylgeranyl diphosphate with the N-terminal terpene cyclase domain, to yield preterpestacin I. Preterpestacin I is then decorated by oxygenation steps that are catalyzed by two cytochrome P450 monooxygenases. First, FUP2 introduces a hydroxyl group at the C-24 position resulting in the formation of preterpestacin IIa. The second P450 monooxygenase catalyzes the hydroxylation at C-16 and C-17 of preterpestacin IIa, producing preterpestacin III. Subsequently, the FAD-dependent oxidoreductase FUP4 catalyzes the oxidation of the hydroxy group at the C-16 position to a keto group, leading to the formation of (-)-terpestacin, which is the immediate precursor of FUP. The final step in the proposed biosynthetic pathway is the addition of an acetyl group at the C-24 position of terpestacin, which is catalyzed by the acetyltransferase FUP5. This is FAD-dependent monooxygenase FUP4 from Fusarium proliferatum (strain ET1) (Orchid endophyte fungus).